The chain runs to 341 residues: Arfaptin-2 (341 aa).

Residues 46-85 (NETSIVSGGYGGSGDGLIPTGSGRHPSHSTTPSGPGDEVA) form a disordered region. Ser72 carries the phosphoserine modification. At Thr76 the chain carries Phosphothreonine. Residues 121 to 321 (TVDLELELQI…NQKQLEQTLQ (201 aa)) enclose the AH domain.

As to quaternary structure, forms homodimers or heterodimers with ARFIP1. Interacts with RAC1. Specifically binds to GTP-bound ARF1 and ARF6, but binds to RAC1.GTP and RAC1.GDP with similar affinities. Interacts with ARL1. Interacts (via N-terminus) with IKBKB and IKBKG; these interactions inhibit activation of NF-kappa-B.

It localises to the golgi apparatus. It is found in the trans-Golgi network membrane. In terms of biological role, plays a role in constitutive metalloproteinase (MMP) secretion from the trans Golgi network. May have important functions during vesicle biogenesis at certain cargo subdomains, which could be predominantly utilized by secreted MMPs, such as MMP7 and MMP2. Also involved in autophagy by regulating the starvation-dependent trafficking of ATG9A vesicles which deliver the phosphatidylinositol 4-kinase beta (PI4KB) to the autophagosome initiation site. Involved in phagophore growth during mitophagy by regulating ATG9A trafficking to mitochondria. In addition, plays a role in NF-kappa-B inhibition by interacting with IKBKB and IKBKG. In Homo sapiens (Human), this protein is Arfaptin-2.